Consider the following 272-residue polypeptide: Type II secretion system protein C (272 aa).

The Cytoplasmic segment spans residues 1–16; sequence MNISKLPPLSPSVIRR. Residues 17–35 traverse the membrane as a helical segment; it reads ILFYLLMLLFCQQLAMIFW. Residues 36–272 are Periplasmic-facing; sequence RVGLPDNSPV…DIYMEFGGDE (237 aa).

This sequence belongs to the GSP C family.

The protein localises to the cell inner membrane. Functionally, involved in a type II secretion system (T2SS, formerly general secretion pathway, GSP) for the export of proteins. Required for the translocation of the multiple pectic enzymes. This is Type II secretion system protein C (outC) from Dickeya chrysanthemi (Pectobacterium chrysanthemi).